The chain runs to 191 residues: Rho-related GTP-binding protein RhoG (191 aa).

10–17 (GDGAVGKT) serves as a coordination point for GTP. Positions 32–40 (YIPTVFDNY) match the Effector region motif. GTP contacts are provided by residues 57 to 61 (DTAGQ) and 115 to 118 (TKKD). 2 positions are modified to phosphothreonine: Thr138 and Thr180. Cys188 is modified (cysteine methyl ester). The S-geranylgeranyl cysteine moiety is linked to residue Cys188. A propeptide spans 189–191 (ILL) (removed in mature form).

The protein belongs to the small GTPase superfamily. Rho family. In terms of assembly, interacts with ARHGEF26. Interacts with ARHGEF16. Interacts with UNC13D; the interaction increases RhoG affinity to the membrane lipids, targets UNC13D to membrane lipids and facilitates cytotoxic granule (CG) docking to the plasma membrane.

It localises to the cell membrane. In terms of biological role, plays a role in immunological synaptic F-actin density and architecture organization. Regulates actin reorganization in lymphocytes, possibly through the modulation of Rac1 activity. Required for the formation of membrane ruffles during macropinocytosis. Plays a role in cell migration and is required for the formation of cup-like structures during trans-endothelial migration of leukocytes. Binds phospholipids in an activation-dependent manner; thereby acting as an anchor for other proteins to the plasma membrane (PM). Plays a role in exocytosis of cytotoxic granules (CG) by lymphocytes/Component of the exocytosis machinery in natural killer (NK) and CD8+ T cells. Promotes the docking of cytotoxic granules (CG) to the plasma membrane through the interaction with UNC13D. Involved in the cytotoxic activity of lymphocytes/primary CD8+ T cells. This Cricetus cricetus (Black-bellied hamster) protein is Rho-related GTP-binding protein RhoG (RHOG).